Reading from the N-terminus, the 143-residue chain is Small ribosomal subunit protein bS6 (143 aa).

Residues 100-143 are disordered; the sequence is QSFIMKSKDDKGDKPERRRRDDDESGDVGVSNDSDNDGGNAEAA. The segment covering 105–121 has biased composition (basic and acidic residues); that stretch reads KSKDDKGDKPERRRRDD. Over residues 126-143 the composition is skewed to low complexity; sequence DVGVSNDSDNDGGNAEAA.

The protein belongs to the bacterial ribosomal protein bS6 family.

Its function is as follows. Binds together with bS18 to 16S ribosomal RNA. The sequence is that of Small ribosomal subunit protein bS6 from Xylella fastidiosa (strain M12).